The chain runs to 38 residues: Mu-agatoxin-Hc1b (38 aa).

4 disulfides stabilise this stretch: C3-C19, C10-C24, C18-C34, and C26-C32. Position 38 is a serine amide (S38).

The protein belongs to the neurotoxin 07 (Beta/delta-agtx) family. 02 (aga-3) subfamily. In terms of tissue distribution, expressed by the venom gland.

The protein resides in the secreted. Insecticidal neurotoxin that induces irreversible neuromuscular blockade in house crickets (A.domesticus). Modifies presynaptic voltage-gated sodium channels (Nav), causing them to open at the normal resting potential of the nerve. This leads to spontaneous release of neurotransmitter and repetitive action potentials in motor neurons. The sequence is that of Mu-agatoxin-Hc1b from Hololena curta (Funnel-web spider).